Here is a 280-residue protein sequence, read N- to C-terminus: Inner membrane ABC transporter permease protein YcjP (280 aa).

The Cytoplasmic portion of the chain corresponds to 1 to 10 (MATNKRTLSR). The helical transmembrane segment at 11-31 (IGFYCGLALFLIITLFPFFVM) threads the bilayer. Topologically, residues 32-53 (LMTSFKGAKEAISLHPTLLPQQ) are periplasmic. Residues 54–74 (WTLEHYVDIFNPMIFPFVDYF) traverse the membrane as a helical segment. Positions 74–265 (FRNSLVVSVV…LPVVIMYALS (192 aa)) constitute an ABC transmembrane type-1 domain. At 75–77 (RNS) the chain is on the cytoplasmic side. A helical membrane pass occupies residues 78–98 (LVVSVVSSVVAVFLGILGAYA). Residues 99 to 117 (LSRLRFKGRMTINASFYTV) lie on the Periplasmic side of the membrane. A helical membrane pass occupies residues 118–138 (YMFSGILLVVPLFKIITALGI). The Cytoplasmic segment spans residues 139–140 (YD). A helical transmembrane segment spans residues 141 to 161 (TEMALIITMVTQTLPTAVFML). The Periplasmic portion of the chain corresponds to 162–189 (KSYFDTIPDEIEEAAMMDGLNRLQIIFR). A helical transmembrane segment spans residues 190-210 (ITVPLAMSGLISVFVYCFMVA). Over 211–214 (WNDY) the chain is Cytoplasmic. Residues 215-235 (LFASIFLSSASNFTLPVGLNA) traverse the membrane as a helical segment. Topologically, residues 236–242 (LFSTPDY) are periplasmic. A helical transmembrane segment spans residues 243–263 (IWGRMMAASLVTALPVVIMYA). Residues 264–280 (LSERFIKSGLTAGGVKG) are Cytoplasmic-facing.

It belongs to the binding-protein-dependent transport system permease family. MalFG subfamily.

Its subcellular location is the cell inner membrane. Its function is as follows. Probably part of the binding-protein-dependent transport system YcjNOP. Probably responsible for the translocation of the substrate across the membrane. The sequence is that of Inner membrane ABC transporter permease protein YcjP (ycjP) from Escherichia coli (strain K12).